Consider the following 32-residue polypeptide: uncharacterized protein (32 aa).

This is an uncharacterized protein from Saccharolobus islandicus (Sulfolobus islandicus).